The chain runs to 257 residues: Uridylate kinase (257 aa).

Position 8-11 (8-11 (KLSG)) interacts with ATP. The interval 21-26 (GSAGFG) is involved in allosteric activation by GTP. UMP is bound at residue Gly56. Residues Gly57 and Arg61 each coordinate ATP. UMP-binding positions include Asp75 and 136 to 143 (NGAPFFTT). The ATP site is built by Asn164, Tyr170, and Asp173.

Belongs to the UMP kinase family. Homohexamer.

Its subcellular location is the cytoplasm. It carries out the reaction UMP + ATP = UDP + ADP. The protein operates within pyrimidine metabolism; CTP biosynthesis via de novo pathway; UDP from UMP (UMPK route): step 1/1. Allosterically activated by GTP. Inhibited by UTP. In terms of biological role, catalyzes the reversible phosphorylation of UMP to UDP. This chain is Uridylate kinase, found in Deinococcus geothermalis (strain DSM 11300 / CIP 105573 / AG-3a).